The chain runs to 208 residues: Protein GrpE (208 aa).

Basic and acidic residues predominate over residues 1–12; sequence MTNKDESVEKNT. The interval 1–59 is disordered; it reads MTNKDESVEKNTESTVEETNIKQNIDDSVEQAEESKGHLQDEAIEETSDENVIEEIDPK. Residues 13-23 are compositionally biased toward polar residues; that stretch reads ESTVEETNIKQ. Residues 42–55 are compositionally biased toward acidic residues; that stretch reads EAIEETSDENVIEE.

The protein belongs to the GrpE family. As to quaternary structure, homodimer.

The protein localises to the cytoplasm. Functionally, participates actively in the response to hyperosmotic and heat shock by preventing the aggregation of stress-denatured proteins, in association with DnaK and GrpE. It is the nucleotide exchange factor for DnaK and may function as a thermosensor. Unfolded proteins bind initially to DnaJ; upon interaction with the DnaJ-bound protein, DnaK hydrolyzes its bound ATP, resulting in the formation of a stable complex. GrpE releases ADP from DnaK; ATP binding to DnaK triggers the release of the substrate protein, thus completing the reaction cycle. Several rounds of ATP-dependent interactions between DnaJ, DnaK and GrpE are required for fully efficient folding. This is Protein GrpE from Staphylococcus aureus (strain Mu3 / ATCC 700698).